Consider the following 739-residue polypeptide: DNA ligase (739 aa).

The interval 1-29 is disordered; the sequence is MTANRPALPTRDKAVSDLSATEASDEHAA. NAD(+) contacts are provided by residues 51-55, 100-101, and glutamate 134; these read DADYD and SL. Catalysis depends on lysine 136, which acts as the N6-AMP-lysine intermediate. 4 residues coordinate NAD(+): arginine 157, glutamate 194, lysine 311, and lysine 335. Zn(2+) is bound by residues cysteine 440, cysteine 443, cysteine 464, and cysteine 470. Positions 592 to 612 are disordered; the sequence is PTEMEEASEETPPTRRRKPQG. In terms of domain architecture, BRCT spans 662–739; it reads ASTSPVSGKT…TEDEWFDLVG (78 aa).

It belongs to the NAD-dependent DNA ligase family. LigA subfamily. Mg(2+) is required as a cofactor. Requires Mn(2+) as cofactor.

It catalyses the reaction NAD(+) + (deoxyribonucleotide)n-3'-hydroxyl + 5'-phospho-(deoxyribonucleotide)m = (deoxyribonucleotide)n+m + AMP + beta-nicotinamide D-nucleotide.. DNA ligase that catalyzes the formation of phosphodiester linkages between 5'-phosphoryl and 3'-hydroxyl groups in double-stranded DNA using NAD as a coenzyme and as the energy source for the reaction. It is essential for DNA replication and repair of damaged DNA. The protein is DNA ligase of Azorhizobium caulinodans (strain ATCC 43989 / DSM 5975 / JCM 20966 / LMG 6465 / NBRC 14845 / NCIMB 13405 / ORS 571).